The sequence spans 137 residues: Large-conductance mechanosensitive channel (137 aa).

2 consecutive transmembrane segments (helical) span residues Ala9 to Phe29 and Ile79 to Ile99.

It belongs to the MscL family. As to quaternary structure, homopentamer.

It localises to the cell inner membrane. Channel that opens in response to stretch forces in the membrane lipid bilayer. May participate in the regulation of osmotic pressure changes within the cell. This Pseudomonas aeruginosa (strain UCBPP-PA14) protein is Large-conductance mechanosensitive channel.